Here is a 181-residue protein sequence, read N- to C-terminus: Probable pyruvoyl-dependent arginine decarboxylase (181 aa).

Ser43 bears the Pyruvic acid (Ser) mark.

This sequence belongs to the PdaD family. It depends on pyruvate as a cofactor.

The enzyme catalyses L-arginine + H(+) = agmatine + CO2. This is Probable pyruvoyl-dependent arginine decarboxylase from Chlorobium phaeobacteroides (strain BS1).